Consider the following 248-residue polypeptide: MIVLVTGATAGFGECITRRFIQQGHKVIATGRRQERLQELKDELGDNLYIAQLDVRNRAAIEEMLASLPAEWCNIDILVNNAGLALGMEPAHKASIEDWETMIDTNNKGLVYMTRAVLPGMVERNHGHIINIGSTAGSWPYAGGNVYGATKAFVRQFSLNLRTDLHGTAVRVTDIEPGLVGGTEFSNVRFKGDDGKAEKTYQNTVALTPEDVSEAVWWVSTLPAHVNINTLEMMPVTQSYAGLNVHRQ.

Residues 7 to 12 (GATAGF), 32 to 33 (RR), 54 to 55 (DV), and N81 contribute to the NADP(+) site. S134 provides a ligand contact to substrate. Residues Y147, K151, and 177 to 185 (PGLVGGTEF) each bind NADP(+). The active-site Proton acceptor is Y147.

Belongs to the short-chain dehydrogenases/reductases (SDR) family. Homotetramer.

It carries out the reaction 3-hydroxypropanoate + NADP(+) = 3-oxopropanoate + NADPH + H(+). The enzyme catalyses L-allo-threonine + NADP(+) = aminoacetone + CO2 + NADPH. Functionally, NADP-dependent dehydrogenase with broad substrate specificity acting on 3-hydroxy acids. Catalyzes the NADP-dependent oxidation of L-allo-threonine to L-2-amino-3-keto-butyrate, which is spontaneously decarboxylated into aminoacetone. Also acts on D-threonine, L-serine, D-serine, D-3-hydroxyisobutyrate, L-3-hydroxyisobutyrate, D-glycerate and L-glycerate. Able to catalyze the reduction of the malonic semialdehyde to 3-hydroxypropionic acid. YdfG is apparently supplementing RutE, the presumed malonic semialdehyde reductase involved in pyrimidine degradation since both are able to detoxify malonic semialdehyde. The chain is NADP-dependent 3-hydroxy acid dehydrogenase YdfG from Escherichia coli O157:H7.